The chain runs to 229 residues: Transmembrane 4 L6 family member 20 (229 aa).

The Lumenal segment spans residues 1–14 (MTCCEGWTSCNGFS). A helical membrane pass occupies residues 15 to 35 (LLVLLLLGVVLNAIPLIVSLV). At 36–44 (EEDQFSQNP) the chain is on the cytoplasmic side. A helical membrane pass occupies residues 45-65 (ISCFEWWFPGIIGAGLMAIPA). Topologically, residues 66–83 (TTMSLTARKRACCNNRTG) are lumenal. The helical transmembrane segment at 84 to 104 (MFLSSLFSVITVIGALYCMLI) threads the bilayer. Topologically, residues 105–185 (SIQALLKGPL…HFDSEENKHR (81 aa)) are cytoplasmic. A helical transmembrane segment spans residues 186-206 (LIHFSVFLGLLLVGILEVLFG). Residues 207-229 (LSQIVIGFLGCLCGVSKRRSQIV) lie on the Lumenal side of the membrane.

The protein belongs to the L6 tetraspanin family. Post-translationally, glycosylated at Asn-132, Asn-148 and Asn-163 in presence of ceramide which inverts the orientation of TM4SF20 in membranes exposing these residues to the endoplasmic reticulum lumen. In terms of processing, cleaved by signal peptidase at Ser-14 but the peptide does not act as a signal peptide. Cleavage is inhibited by ceramide which inverts the orientation of TM4SF20 in membranes exposing the N-terminus to the cytosol and not to the endoplasmic reticulum lumen. Expressed in the brain, with high levels in the parietal lobe, hippocampus, pons, white matter and cerebellum.

The protein resides in the membrane. The protein localises to the endoplasmic reticulum membrane. In terms of biological role, polytopic transmembrane protein that inhibits regulated intramembrane proteolysis (RIP) of CREB3L1, inhibiting its activation and the induction of collagen synthesis. In response to ceramide, which alters TM4SF20 membrane topology, stimulates RIP activation of CREB3L1. Ceramide reverses the direction through which transmembrane helices are translocated into the endoplasmic reticulum membrane during translation of TM4SF20, this mechanism is called 'regulated alternative translocation' (RAT) and regulates the function of the transmembrane protein. In Homo sapiens (Human), this protein is Transmembrane 4 L6 family member 20 (TM4SF20).